Consider the following 139-residue polypeptide: MATNRTFTMIKPDGVQNGHIGGIVNMITEAGFKIVSMKLTQLTVADAQKFYEVHAARPFYGELVAFMSRGPIVAAILEKDNAVEDFRTLIGATNPADAAEGTIRKKYATSIGENAVHGSDSDENAAIEGAFHFAGREQF.

Residues Lys11, Phe59, Arg87, Thr93, Arg104, and Asn114 each contribute to the ATP site. The active-site Pros-phosphohistidine intermediate is His117.

Belongs to the NDK family. As to quaternary structure, homotetramer. Mg(2+) serves as cofactor.

It is found in the cytoplasm. It catalyses the reaction a 2'-deoxyribonucleoside 5'-diphosphate + ATP = a 2'-deoxyribonucleoside 5'-triphosphate + ADP. The catalysed reaction is a ribonucleoside 5'-diphosphate + ATP = a ribonucleoside 5'-triphosphate + ADP. Major role in the synthesis of nucleoside triphosphates other than ATP. The ATP gamma phosphate is transferred to the NDP beta phosphate via a ping-pong mechanism, using a phosphorylated active-site intermediate. This Flavobacterium psychrophilum (strain ATCC 49511 / DSM 21280 / CIP 103535 / JIP02/86) protein is Nucleoside diphosphate kinase.